A 20-amino-acid chain; its full sequence is Pommaclein (20 aa).

This sequence belongs to the GASA family. In terms of tissue distribution, expressed in pulp (aril) of fruits (at protein level).

The protein is Pommaclein of Punica granatum (Pomegranate).